A 214-amino-acid polypeptide reads, in one-letter code: tRNA (guanine-N(7)-)-methyltransferase (214 aa).

S-adenosyl-L-methionine is bound by residues glutamate 44, glutamate 69, aspartate 96, and aspartate 118. Residue aspartate 118 is part of the active site. Residues lysine 122, aspartate 154, and 191–194 (TEYE) each bind substrate.

Belongs to the class I-like SAM-binding methyltransferase superfamily. TrmB family.

It carries out the reaction guanosine(46) in tRNA + S-adenosyl-L-methionine = N(7)-methylguanosine(46) in tRNA + S-adenosyl-L-homocysteine. It participates in tRNA modification; N(7)-methylguanine-tRNA biosynthesis. Catalyzes the formation of N(7)-methylguanine at position 46 (m7G46) in tRNA. The polypeptide is tRNA (guanine-N(7)-)-methyltransferase (Listeria monocytogenes serovar 1/2a (strain ATCC BAA-679 / EGD-e)).